Consider the following 389-residue polypeptide: Xylose isomerase (389 aa).

Residues H101 and D104 contribute to the active site. Residues E232, E268, H271, D296, D307, and D309 each coordinate Mg(2+).

It belongs to the xylose isomerase family. As to quaternary structure, homotetramer. Mg(2+) is required as a cofactor.

It localises to the cytoplasm. The catalysed reaction is alpha-D-xylose = alpha-D-xylulofuranose. This chain is Xylose isomerase, found in Lactococcus lactis subsp. cremoris (strain SK11).